The chain runs to 55 residues: Large ribosomal subunit protein bL33 (55 aa).

This sequence belongs to the bacterial ribosomal protein bL33 family.

The protein is Large ribosomal subunit protein bL33 of Yersinia enterocolitica serotype O:8 / biotype 1B (strain NCTC 13174 / 8081).